We begin with the raw amino-acid sequence, 204 residues long: RNA-free ribonuclease P (204 aa).

This sequence belongs to the HARP family.

The enzyme catalyses Endonucleolytic cleavage of RNA, removing 5'-extranucleotides from tRNA precursor.. Its function is as follows. RNA-free RNase P that catalyzes the removal of the 5'-leader sequence from pre-tRNA to produce the mature 5'-terminus. This chain is RNA-free ribonuclease P, found in Ignicoccus hospitalis (strain KIN4/I / DSM 18386 / JCM 14125).